The primary structure comprises 550 residues: Hydroxylamine reductase (550 aa).

[2Fe-2S] cluster is bound by residues C3, C6, C18, and C25. Residues H249, E273, C317, C405, C433, C458, E492, and K494 each contribute to the hybrid [4Fe-2O-2S] cluster site. Residue C405 is modified to Cysteine persulfide.

It belongs to the HCP family. [2Fe-2S] cluster is required as a cofactor. Requires hybrid [4Fe-2O-2S] cluster as cofactor.

The protein localises to the cytoplasm. The enzyme catalyses A + NH4(+) + H2O = hydroxylamine + AH2 + H(+). In terms of biological role, catalyzes the reduction of hydroxylamine to form NH(3) and H(2)O. This chain is Hydroxylamine reductase, found in Escherichia coli O139:H28 (strain E24377A / ETEC).